Consider the following 404-residue polypeptide: MVQLAPAAAMDEVTFRSDTVLSDVHLYTPNHRHLMVRLNSVGQPVFLSQFKLLWSQDSWTDSGAKGGSHRDVHTKEPPSAETGSTGSPPGSGHGNEGFSLQAGTDTTGQEVAEAQLDEDGDLDVVRRPRAASDSNPAGPLRDKVHPMILAQEEDDVLGEEAQGSPHDIIRIEHTMATPLEDVGKQVWRGALLLADYILFRQDLFRGCTALELGAGTGLASIIAATMARTVYCTDVGADLLSMCQRNIALNSHLAATGGGIVRVKELDWLKDDLCTDPKVPFSWSQEEISDLYDHTTILFAAEVFYDDDLTDAVFKTLSRLAHRLKNACTAILSVEKRLNFTLRHLDVTCEAYDHFRSCLHALEQLADGKLRFVVEPVEASFPQLLVYERLQQLELWKIIAEPVT.

2 disordered regions span residues 60–102 and 115–145; these read TDSG…SLQA and QLDE…DKVH. Residues 68-78 are compositionally biased toward basic and acidic residues; the sequence is SHRDVHTKEPP. A compositionally biased stretch (low complexity) spans 79–88; that stretch reads SAETGSTGSP. Ser-132 carries the post-translational modification Phosphoserine.

Belongs to the methyltransferase superfamily. METTL22 family. Interacts with members of the heat shock protein 90 and 70 families; these proteins probably are methylation substrates.

The protein localises to the nucleus. It carries out the reaction L-lysyl-[protein] + 3 S-adenosyl-L-methionine = N(6),N(6),N(6)-trimethyl-L-lysyl-[protein] + 3 S-adenosyl-L-homocysteine + 3 H(+). Its function is as follows. Protein N-lysine methyltransferase. Trimethylates KIN at Lys-135 (in vitro). This chain is Methyltransferase-like protein 22 (METTL22), found in Homo sapiens (Human).